An 81-amino-acid polypeptide reads, in one-letter code: Dermaseptin-B2 (81 aa).

The first 22 residues, 1–22 (MAFLKKSLFLVLFLGLVSLSIC), serve as a signal peptide directing secretion. Residues 23–43 (EEEKRENEDEEEQEDDEQSEM) constitute a propeptide that is removed on maturation. Residues 24–46 (EEKRENEDEEEQEDDEQSEMKRG) form a disordered region. Over residues 30 to 40 (EDEEEQEDDEQ) the composition is skewed to acidic residues. The interval 54–55 (VG) is hinge region that separates the two alpha-helices that constitute the peptide. V78 carries the post-translational modification Valine amide. Residues 80-81 (EQ) constitute a propeptide that is removed on maturation.

Post-translationally, amidation permits an increased antimicrobial activity against some microorganisms such as T.album and S.cerevisiae. May contain a D-amino acid residue, since the natural peptide is not identical in chromatographic properties to the synthetic peptide. In terms of tissue distribution, expressed by the skin glands.

Its subcellular location is the secreted. It localises to the target cell membrane. Functionally, cationic amphipathic alpha-helical antimicrobial peptide with potent activity against Gram-negative and Gram-positive bacteria, fungi and protozoa. Acts in a synergistic effect in combination with Plasticin-B1 at doses that are not active alone. Acts by disturbing membrane functions. On model membranes, induces a strong perturbation of anionic lipid bilayers, resides at the hydrocarbon core-water interface, parallel to the plane of the membrane, and interacts preferentially with the polar head groups and glycerol backbone region of the anionic phospholipids, as well as the region of the lipid acyl chain near the bilayer surface. Induces a positive curvature of the bilayer and clustering of anionic lipids, consistent with a carpet mechanism, that may lead to the formation of mixed peptide-phospholipid toroidal, transient pores and membrane permeation/disruption once a threshold peptide accumulation is reached. Also enhances binding of agonists to adenosine A1 receptors (ADORA1), adenosine A2a receptors (ADORA2A), alpha-2 adrenergic receptors (ADRA2A) and 5-hydroxytryptamine 1A receptors (HTR1A). In addition, it enhances guanyl nucleotide exchange which may result in the conversion of receptors to a high affinity state complexed with guanyl nucleotide free G-protein. Affects human behavior eliciting profound malaise, followed by listlessness and then euphoria. Does not show cytotoxic activity on CHO cells. Does not act as a chemoattractant. Does not show hemolytic activity. This chain is Dermaseptin-B2 (ADR), found in Phyllomedusa bicolor (Two-colored leaf frog).